The primary structure comprises 583 residues: 5-aminolevulinate synthase, erythroid-specific, mitochondrial (583 aa).

Arginine 158 contributes to the succinyl-CoA binding site. The pyridoxal 5'-phosphate site is built by cysteine 253 and phenylalanine 254. Succinyl-CoA contacts are provided by serine 275 and arginine 294. Positions 327, 355, and 383 each coordinate pyridoxal 5'-phosphate. Lysine 386 is an active-site residue. N6-(pyridoxal phosphate)lysine is present on lysine 386. Residues threonine 415 and threonine 416 each contribute to the pyridoxal 5'-phosphate site. Threonine 503 is a succinyl-CoA binding site.

The protein belongs to the class-II pyridoxal-phosphate-dependent aminotransferase family. As to quaternary structure, homodimer. Requires pyridoxal 5'-phosphate as cofactor.

The protein resides in the mitochondrion inner membrane. The catalysed reaction is succinyl-CoA + glycine + H(+) = 5-aminolevulinate + CO2 + CoA. Its pathway is porphyrin-containing compound metabolism; protoporphyrin-IX biosynthesis; 5-aminolevulinate from glycine: step 1/1. Its function is as follows. Catalyzes the pyridoxal 5'-phosphate (PLP)-dependent condensation of succinyl-CoA and glycine to form aminolevulinic acid (ALA), with CoA and CO2 as by-products. Contributes significantly to heme formation during erythropoiesis. This chain is 5-aminolevulinate synthase, erythroid-specific, mitochondrial (alas2), found in Danio rerio (Zebrafish).